A 334-amino-acid polypeptide reads, in one-letter code: Transcription initiation factor IIB (334 aa).

The TFIIB-type zinc finger occupies 34 to 65 (TESVCPECKSRQLVHDYERAELVCQNCGLVID). C38, C41, C57, and C60 together coordinate Zn(2+). Repeat copies occupy residues 151–234 (SELD…SREL) and 245–326 (DYVP…ELAE).

It belongs to the TFIIB family.

In terms of biological role, stabilizes TBP binding to an archaeal box-A promoter. Also responsible for recruiting RNA polymerase II to the pre-initiation complex (DNA-TBP-TFIIB). The protein is Transcription initiation factor IIB of Methanosphaerula palustris (strain ATCC BAA-1556 / DSM 19958 / E1-9c).